The chain runs to 1311 residues: Zinc finger protein 423 (1311 aa).

Residues 1–11 are compositionally biased toward basic residues; the sequence is MSRRKQAKPRS. 3 disordered regions span residues 1–21, 34–70, and 95–123; these read MSRRKQAKPRSVKVEEGEASD, GGLEGESECDRKSSRALEDRNSVTSQEERNEDDEDVE, and AHRCPGDGDDDPQLSWVASSPSSKDVASP. Residues 41-54 are compositionally biased toward basic and acidic residues; sequence ECDRKSSRALEDRN. Residues S55 and S58 each carry the phosphoserine modification. The segment at 75–101 adopts a C2H2-type 1; degenerate zinc-finger fold; that stretch reads YTCDHCQQDFESLADLTDHRAHRCPGD. The segment covering 110–123 has biased composition (polar residues); that stretch reads WVASSPSSKDVASP. C2H2-type zinc fingers lie at residues 146 to 168, 174 to 196, 202 to 224, 230 to 252, 271 to 294, 303 to 326, and 331 to 353; these read YPCQFCDKSFIRLSYLKRHEQIH, FKCTFCSRLFKHKRSRDRHIKLH, YHCHECEAAFSRRDHLKIHLKTH, FKCSVCKRGFSSTSSLQSHMQAH, FMCDYCEDTFSQTEELEKHVLTLH, LQCIHCPEVFVDESTLLAHIHQAH, and HKCPMCPEQFSSVEGVYCHLDSH. Residues 354–426 form a disordered region; it reads RQPDSSNHSV…PLRGQKKMRD (73 aa). Over residues 373 to 382 the composition is skewed to polar residues; that stretch reads ASMSSATPDS. The segment covering 390-404 has biased composition (low complexity); the sequence is SVASMSSATPDSSAS. The segment at 436–460 adopts a C2H2-type 9; degenerate zinc-finger fold; that stretch reads YSCPYCSKRDFTSLAVLEIHLKTIH. 3 C2H2-type zinc fingers span residues 468-491, 507-530, and 544-567; these read HTCQICLDSMPTLYNLNEHVRKLH, FHCNYCPEMFADINSLQEHIRVSH, and FFCNQCSMGFLTESSLTEHIQQAH. A C2H2-type 13; atypical zinc finger spans residues 590-615; that stretch reads YSCPYCTNSPIFGSILKLTKHIKENH. The segment at 617–654 is disordered; sequence NIPLAHSKKSKAEQSPVSSDVEVSSPKRQRLSGSANSI. A Phosphoserine modification is found at S631. Low complexity predominate over residues 631–642; that stretch reads SPVSSDVEVSSP. C2H2-type zinc fingers lie at residues 659-681, 689-711, 719-742, 747-770, 777-800, 808-830, and 834-857; these read YPCNQCDLKFSNFESFQTHLKLH, QACPQCKEDFDSQESLLQHLTVH, YVCESCDKQFSSVDDLQKHLLDMH, YHCTLCQEVFDSKVSIQVHLAVKH, YRCTACNWDFRKEADLQVHVKHSH, HKCIFCGETFSTEVELQCHITTH, and YNCRFCSKAFHAVLLLEKHLREKH. A C2H2-type 21; degenerate zinc finger spans residues 913–935; sequence YGCDICGAAYTMEVLLQNHRLRD. 3 C2H2-type zinc fingers span residues 957-979, 986-1008, and 1047-1069; these read HKCNVCSRTFFSENGLREHLQTH, YMCPICGERFPSLLTLTEHKVTH, and FRCVVCMQTVTSTLELKIHGTFH. A Phosphoserine modification is found at S1081. A C2H2-type 25; degenerate zinc finger spans residues 1091-1109; that stretch reads YKCALCLKEFRSKQDLVRL. 5 C2H2-type zinc fingers span residues 1147 to 1170, 1195 to 1217, 1225 to 1247, 1256 to 1279, and 1286 to 1309; these read LRCPECNVKFESAEDLESHMQVDH, YQCIKCQMTFENEREIQIHVANH, HECKLCNQMFDSPAKLLCHLIEH, FKCPVCFTVFVQANKLQQHIFAVH, and YDCSQCPQKFFFQTELQNHTMSQH. The span at 1163–1174 shows a compositional bias: basic and acidic residues; it reads ESHMQVDHRDLT. The segment at 1163-1190 is disordered; it reads ESHMQVDHRDLTPETSGPRKGAQTSPVP.

It belongs to the krueppel C2H2-type zinc-finger protein family. As to quaternary structure, homodimer. Interacts with PARP1, SMAD1 and SMAD4. Interacts with EBF1. Interacts with CEP290. In terms of tissue distribution, expressed in brain, eye, olfactory epithelium, spleen and heart. Expressed in the basal layer, consisting of neural precursor cells and immature sensory neurons of the olfactory epithelium, but not in the mature receptor cells.

Its subcellular location is the nucleus. In terms of biological role, transcription factor that can both act as an activator or a repressor depending on the context. Plays a central role in BMP signaling and olfactory neurogenesis. Associates with SMADs in response to BMP2 leading to activate transcription of BMP target genes. Acts as a transcriptional repressor via its interaction with EBF1, a transcription factor involved in terminal olfactory receptor neurons differentiation; this interaction preventing EBF1 to bind DNA and activate olfactory-specific genes. Involved in olfactory neurogenesis by participating in a developmental switch that regulates the transition from differentiation to maturation in olfactory receptor neurons. Controls proliferation and differentiation of neural precursors in cerebellar vermis formation. The sequence is that of Zinc finger protein 423 (Znf423) from Rattus norvegicus (Rat).